A 318-amino-acid chain; its full sequence is tRNA-cytidine(32) 2-sulfurtransferase (318 aa).

The short motif at 52–57 is the PP-loop motif element; that stretch reads SGGKDS. 3 residues coordinate [4Fe-4S] cluster: Cys-127, Cys-130, and Cys-218.

This sequence belongs to the TtcA family. Homodimer. Mg(2+) is required as a cofactor. It depends on [4Fe-4S] cluster as a cofactor.

The protein localises to the cytoplasm. It carries out the reaction cytidine(32) in tRNA + S-sulfanyl-L-cysteinyl-[cysteine desulfurase] + AH2 + ATP = 2-thiocytidine(32) in tRNA + L-cysteinyl-[cysteine desulfurase] + A + AMP + diphosphate + H(+). It participates in tRNA modification. Catalyzes the ATP-dependent 2-thiolation of cytidine in position 32 of tRNA, to form 2-thiocytidine (s(2)C32). The sulfur atoms are provided by the cysteine/cysteine desulfurase (IscS) system. This is tRNA-cytidine(32) 2-sulfurtransferase from Actinobacillus pleuropneumoniae serotype 7 (strain AP76).